The primary structure comprises 54 residues: Large ribosomal subunit protein bL33 (54 aa).

It belongs to the bacterial ribosomal protein bL33 family.

This Herpetosiphon aurantiacus (strain ATCC 23779 / DSM 785 / 114-95) protein is Large ribosomal subunit protein bL33.